We begin with the raw amino-acid sequence, 670 residues long: E3 ubiquitin-protein ligase TRAF7 (670 aa).

2 disordered regions span residues 1–37 (MSSGKSARYNRFSGGPSNLPTPDVTTGTRMETTFGPA) and 49–97 (GTST…SLHS). Polar residues-rich tracts occupy residues 15–31 (GPSNLPTPDVTTGTRME) and 49–67 (GTSTYKQHCRTPSSSSTLA). Phosphoserine occurs at positions 61, 88, and 91. An RING-type zinc finger spans residues 131–165 (CQLCCSVFKDPVITTCGHTFCRRCALKSEKCPVDN). Residues 222 to 276 (HEGSCDYRPVRCPNNPSCPPLLRMNLEAHLKECEHIKCPHSKYGCTFIGNQDTYE) form a TRAF-type zinc finger. WD repeat units follow at residues 394 to 433 (GHQGPVWCLCVYSMGDLLFSGSSDKTIKVWDTCTTYKCQK), 437 to 474 (GHDGIVLALCIQGCKLYSGSADCTIIVWDIQNLQKVNT), 477 to 513 (AHDNPVCTLVSSHNVLFSGSLKAIKVWDIVGTELKLK), 515 to 554 (ELTGLNHWVRALVAAQSYLYSGSYQTIKIWDIRTLDCIHV), 557 to 594 (TSGGSVYSIAVTNHHIVCGTYENLIHVWDIESKEQVRT), 597 to 638 (GHVG…CTQT), and 641 to 669 (RHQGSVTALAVSRGRLFSGAVDSTVKVWT).

This sequence belongs to the WD repeat TRAF7 family. In terms of assembly, homodimer. Interacts with MAP3K3 and promotes the kinase activity of this enzyme. Phosphorylated by MAP3K3. Post-translationally, ubiquitinates itself upon phosphorylation. In terms of tissue distribution, ubiquitously expressed with high levels in skeletal muscle, heart, colon, spleen, kidney, liver and placenta.

Its subcellular location is the cytoplasmic vesicle. It is found in the cytoplasm. It localises to the nucleus. The enzyme catalyses S-ubiquitinyl-[E2 ubiquitin-conjugating enzyme]-L-cysteine + [acceptor protein]-L-lysine = [E2 ubiquitin-conjugating enzyme]-L-cysteine + N(6)-ubiquitinyl-[acceptor protein]-L-lysine.. Its pathway is protein modification; protein ubiquitination. Its function is as follows. E3 ubiquitin and SUMO-protein ligase that plays a role in different biological processes such as innate immunity, inflammation or apoptosis. Potentiates MAP3K3-mediated activation of JUN/AP1 and DDIT3 transcriptional regulators. Negatively regulates MYB transcriptional activity by sequestering it to the cytosol via SUMOylation. Plays a role in the phosphorylation of MAPK1 and/or MAPK3, probably via its interaction with MAP3K3. Negatively regulates RLR-mediated innate immunity by promoting 'Lys-48'-linked ubiquitination of TBK1 through its RING domain to inhibit the cellular antiviral response. Promotes 'Lys-29'-linked polyubiquitination of NEMO/IKBKG and RELA leading to targeting these two proteins to lysosomal degradative pathways, reducing the transcriptional activity of NF-kappa-B. The protein is E3 ubiquitin-protein ligase TRAF7 (TRAF7) of Homo sapiens (Human).